Reading from the N-terminus, the 65-residue chain is Large ribosomal subunit protein bL35 (65 aa).

This sequence belongs to the bacterial ribosomal protein bL35 family.

This is Large ribosomal subunit protein bL35 from Thermotoga maritima (strain ATCC 43589 / DSM 3109 / JCM 10099 / NBRC 100826 / MSB8).